The chain runs to 946 residues: Bifunctional glutamine synthetase adenylyltransferase/adenylyl-removing enzyme (946 aa).

An adenylyl removase region spans residues Met-1–Glu-440. The adenylyl transferase stretch occupies residues Ser-449–Glu-946.

The protein belongs to the GlnE family. It depends on Mg(2+) as a cofactor.

The catalysed reaction is [glutamine synthetase]-O(4)-(5'-adenylyl)-L-tyrosine + phosphate = [glutamine synthetase]-L-tyrosine + ADP. It catalyses the reaction [glutamine synthetase]-L-tyrosine + ATP = [glutamine synthetase]-O(4)-(5'-adenylyl)-L-tyrosine + diphosphate. Involved in the regulation of glutamine synthetase GlnA, a key enzyme in the process to assimilate ammonia. When cellular nitrogen levels are high, the C-terminal adenylyl transferase (AT) inactivates GlnA by covalent transfer of an adenylyl group from ATP to specific tyrosine residue of GlnA, thus reducing its activity. Conversely, when nitrogen levels are low, the N-terminal adenylyl removase (AR) activates GlnA by removing the adenylyl group by phosphorolysis, increasing its activity. The regulatory region of GlnE binds the signal transduction protein PII (GlnB) which indicates the nitrogen status of the cell. The chain is Bifunctional glutamine synthetase adenylyltransferase/adenylyl-removing enzyme from Escherichia coli (strain SMS-3-5 / SECEC).